The primary structure comprises 242 residues: Ribosomal RNA large subunit methyltransferase E (242 aa).

Residues Gly-64, Trp-66, Asp-84, Asp-100, and Asp-125 each contribute to the S-adenosyl-L-methionine site. Lys-165 acts as the Proton acceptor in catalysis. Positions 198–242 (SSETFLLGRGLKKASPNGLDSRSGTAAEPAPLVPIGTNSMPANGD) are disordered. Polar residues predominate over residues 233-242 (GTNSMPANGD).

The protein belongs to the class I-like SAM-binding methyltransferase superfamily. RNA methyltransferase RlmE family.

The protein localises to the cytoplasm. The enzyme catalyses uridine(2552) in 23S rRNA + S-adenosyl-L-methionine = 2'-O-methyluridine(2552) in 23S rRNA + S-adenosyl-L-homocysteine + H(+). Its function is as follows. Specifically methylates the uridine in position 2552 of 23S rRNA at the 2'-O position of the ribose in the fully assembled 50S ribosomal subunit. The protein is Ribosomal RNA large subunit methyltransferase E of Verminephrobacter eiseniae (strain EF01-2).